The sequence spans 580 residues: N(6)-adenosine-methyltransferase catalytic subunit METTL3 (580 aa).

Residues M1–P70 form a disordered region. S2 carries the N-acetylserine; alternate modification. Residue S2 is modified to Phosphoserine; alternate. Residues Q28–N37 are compositionally biased toward basic and acidic residues. Phosphoserine is present on residues S43, S48, and S50. Residues K177, K211, K212, and K215 each participate in a glycyl lysine isopeptide (Lys-Gly) (interchain with G-Cter in SUMO1) cross-link. Positions L198–S219 are disordered. Positions A210–K215 match the Nuclear localization signal motif. 2 positions are modified to phosphoserine: S219 and S243. Residue T348 is modified to Phosphothreonine. Phosphoserine is present on S350. S-adenosyl-L-methionine contacts are provided by residues D377–I378 and D395. Residues P396–T410 are gate loop 1. Interaction with METTL14 regions lie at residues E450 to E454 and Q464 to K480. Residues Q462–G479 form an interphase loop region. The interval R465–H478 is positively charged region required for RNA-binding. A gate loop 2 region spans residues V507–D515. Residues K513, R536–N539, and N549–Q550 contribute to the S-adenosyl-L-methionine site.

Belongs to the MT-A70-like family. Heterodimer; heterodimerizes with METTL14 to form an antiparallel heterodimer that constitutes an active methyltransferase. Component of the WMM complex, a N6-methyltransferase complex composed of a catalytic subcomplex, named MAC, and of an associated subcomplex, named MACOM. The MAC subcomplex is composed of METTL3 and METTL14. The MACOM subcomplex is composed of WTAP, ZC3H13, CBLL1/HAKAI, VIRMA, and, in some cases of RBM15 (RBM15 or RBM15B). Interacts with NCBP1/CBP80. Interacts with EIF4E. Interacts with EIF3B. In terms of processing, sumoylation inhibits the N6-adenosine-methyltransferase activity. Sumoylation does not affect subcellular location or interaction with METTL14. Desumoylated by SENP1. Widely expressed at low level. Expressed in spleen, thymus, prostate, testis, ovary, small intestine, colon and peripheral blood leukocytes.

The protein resides in the nucleus. It is found in the nucleus speckle. The protein localises to the cytoplasm. The enzyme catalyses an adenosine in mRNA + S-adenosyl-L-methionine = an N(6)-methyladenosine in mRNA + S-adenosyl-L-homocysteine + H(+). Methyltransferase activity is regulated by miRNAs via a sequence pairing mechanism. Methyltransferase activity is inhibited by sumoylation. Functionally, the METTL3-METTL14 heterodimer forms a N6-methyltransferase complex that methylates adenosine residues at the N(6) position of some RNAs and regulates various processes such as the circadian clock, differentiation of embryonic and hematopoietic stem cells, cortical neurogenesis, response to DNA damage, differentiation of T-cells and primary miRNA processing. In the heterodimer formed with METTL14, METTL3 constitutes the catalytic core. N6-methyladenosine (m6A), which takes place at the 5'-[AG]GAC-3' consensus sites of some mRNAs, plays a role in mRNA stability, processing, translation efficiency and editing. M6A acts as a key regulator of mRNA stability: methylation is completed upon the release of mRNA into the nucleoplasm and promotes mRNA destabilization and degradation. In embryonic stem cells (ESCs), m6A methylation of mRNAs encoding key naive pluripotency-promoting transcripts results in transcript destabilization, promoting differentiation of ESCs. M6A regulates the length of the circadian clock: acts as an early pace-setter in the circadian loop by putting mRNA production on a fast-track for facilitating nuclear processing, thereby providing an early point of control in setting the dynamics of the feedback loop. M6A also regulates circadian regulation of hepatic lipid metabolism. M6A regulates spermatogonial differentiation and meiosis and is essential for male fertility and spermatogenesis. Also required for oogenesis. Involved in the response to DNA damage: in response to ultraviolet irradiation, METTL3 rapidly catalyzes the formation of m6A on poly(A) transcripts at DNA damage sites, leading to the recruitment of POLK to DNA damage sites. M6A is also required for T-cell homeostasis and differentiation: m6A methylation of transcripts of SOCS family members (SOCS1, SOCS3 and CISH) in naive T-cells promotes mRNA destabilization and degradation, promoting T-cell differentiation. Inhibits the type I interferon response by mediating m6A methylation of IFNB. M6A also takes place in other RNA molecules, such as primary miRNA (pri-miRNAs). Mediates m6A methylation of Xist RNA, thereby participating in random X inactivation: m6A methylation of Xist leads to target YTHDC1 reader on Xist and promote transcription repression activity of Xist. M6A also regulates cortical neurogenesis: m6A methylation of transcripts related to transcription factors, neural stem cells, the cell cycle and neuronal differentiation during brain development promotes their destabilization and decay, promoting differentiation of radial glial cells. METTL3 mediates methylation of pri-miRNAs, marking them for recognition and processing by DGCR8. Acts as a positive regulator of mRNA translation independently of the methyltransferase activity: promotes translation by interacting with the translation initiation machinery in the cytoplasm. Its overexpression in a number of cancer cells suggests that it may participate in cancer cell proliferation by promoting mRNA translation. During human coronavirus SARS-CoV-2 infection, adds m6A modifications in SARS-CoV-2 RNA leading to decreased RIGI binding and subsequently dampening the sensing and activation of innate immune responses. The sequence is that of N(6)-adenosine-methyltransferase catalytic subunit METTL3 from Homo sapiens (Human).